Consider the following 633-residue polypeptide: Extracellular metalloproteinase mep (633 aa).

An N-terminal signal peptide occupies residues 1 to 18 (MRLLSLAGAMALPLCVLA). A propeptide spanning residues 19-244 (HPTHRTRGIA…IHGVVDYISD (226 aa)) is cleaved from the precursor. N326 carries an N-linked (GlcNAc...) asparagine glycan. H428 is a binding site for Zn(2+). Residue E429 is part of the active site. Residue H432 participates in Zn(2+) binding. N-linked (GlcNAc...) asparagine glycosylation occurs at N514.

It belongs to the peptidase M36 family. Zn(2+) serves as cofactor.

It is found in the secreted. In terms of biological role, secreted metalloproteinase that allows assimilation of proteinaceous substrates. The protein is Extracellular metalloproteinase mep (mep) of Aspergillus terreus (strain NIH 2624 / FGSC A1156).